Consider the following 245-residue polypeptide: MFSLKMRASKDGVHVSGAERISTENKIEEIANSLIKRALFHENGTPDTINLKLEKITSEITYLKHIPIKTLISNNKETSRNISRNILRKELEVYFLKNGKDFGKIDILIDTAFEIIDKGNMRGAAVLDLDGNRLEEDTEKGVRVKNIDTSEELKSKILADSKLTDRTIDAIAIATKVLNFGFIAEICTSDNYSYNIGYVATKSGYFRIPNLKNEGEFGGRVFFIENSANIEEIFEKIEKTPVIVY.

The protein belongs to the BioW family. Homodimer. The cofactor is Mg(2+).

The enzyme catalyses heptanedioate + ATP + CoA = 6-carboxyhexanoyl-CoA + AMP + diphosphate. Its pathway is metabolic intermediate metabolism; pimeloyl-CoA biosynthesis; pimeloyl-CoA from pimelate: step 1/1. Its function is as follows. Catalyzes the transformation of pimelate into pimeloyl-CoA with concomitant hydrolysis of ATP to AMP. This is 6-carboxyhexanoate--CoA ligase from Methanococcus vannielii (strain ATCC 35089 / DSM 1224 / JCM 13029 / OCM 148 / SB).